Consider the following 61-residue polypeptide: UPF0434 protein Sama_1339 (61 aa).

This sequence belongs to the UPF0434 family.

The protein is UPF0434 protein Sama_1339 of Shewanella amazonensis (strain ATCC BAA-1098 / SB2B).